The sequence spans 115 residues: Delta-hexatoxin-Hi1a (115 aa).

Residues 1-18 (MKVIATLYGLLFLTVVLG) form the signal peptide. Residues 19–73 (DITEGNENDLVENFREELSEADIPLLKKLEAIEDALLEKDFLPYEEEDRNARPKR) constitute a propeptide that is removed on maturation. Intrachain disulfides connect cysteine 74–cysteine 88, cysteine 81–cysteine 93, cysteine 87–cysteine 104, and cysteine 89–cysteine 115.

It belongs to the neurotoxin 06 (delta-actx) family. In terms of tissue distribution, expressed by the venom gland.

The protein resides in the secreted. Its function is as follows. Neurotoxin that slows inactivation of voltage-gated sodium channels (Nav). In vivo, is lethal to both vertebrates and insects. The polypeptide is Delta-hexatoxin-Hi1a (Hadronyche infensa (Fraser island funnel-web spider)).